A 432-amino-acid polypeptide reads, in one-letter code: Teosinte glume architecture 1 (432 aa).

Disordered stretches follow at residues H20–A55 and E68–C102. Positions A22 to T41 are enriched in low complexity. The SBP-type zinc-finger motif lies at C102–P179. Residues C105, C110, C127, H130, C146, C149, H153, and C165 each contribute to the Zn(2+) site. A compositionally biased stretch (gly residues) spans G409–D420. Positions G409–Q432 are disordered.

As to quaternary structure, monomer and homodimer. As to expression, strongly expressed in immature ears and weakly in husks. Found in the inflorescence meristem of the developing ear, in the spikelet pair primordia, the glume primordia, the cupule forming region and other floral organs. Not detected in other tissues.

Functionally, SBP transcriptional regulator probably involved in the domestication of maize. Acts as a transcriptional repressor binding to a 5'-GTAC-3' motif. May repress the growth of lateral branches in length and numbers. The protein is Teosinte glume architecture 1 of Zea mays (Maize).